The primary structure comprises 431 residues: O-methyltransferase gliM (431 aa).

Residues glutamate 20–valine 85 adopt a coiled-coil conformation. Residues aspartate 287 and glycine 319–phenylalanine 321 each bind S-adenosyl-L-methionine. Catalysis depends on histidine 338, which acts as the Proton acceptor.

The protein belongs to the class I-like SAM-binding methyltransferase superfamily. Cation-independent O-methyltransferase family. COMT subfamily.

It functions in the pathway mycotoxin biosynthesis. Its function is as follows. O-methyltransferase; part of the gene cluster that mediates the biosynthesis of gliotoxin, a member of the epipolythiodioxopiperazine (ETP) class of toxins characterized by a disulfide bridged cyclic dipeptide. The first step in gliotoxin biosynthesis is the condensation of serine and phenylalanine to form the cyclo-L-phenylalanyl-L-serine diketopiperazine (DKP) by the NRPS gliP. GliP is also able to produce the DKP cyclo-L-tryptophanyl-L-serine, suggesting that the substrate specificity of the first adenylation (A) domain in gliP is sufficiently relaxed to accommodate both L-Phe and L-Trp. The cytochrome P450 monooxygenase gliC has been shown to catalyze the subsequent hydroxylation of the alpha-carbon of L-Phe in cyclo-L-phenylalanyl-L-serine whereas the second cytochrome P450 enzyme, gliF, is presumably involved in the modification of the DKP side chain. The glutathione S-transferase (GST) gliG then forms a bis-glutathionylated biosynthetic intermediate which is responsible for the sulfurization of gliotoxin. This bis-glutathionylated intermediate is subsequently processed by the gamma-glutamyl cyclotransferase gliK to remove both gamma-glutamyl moieties. Subsequent processing via gliI yields a biosynthetic intermediate, which is N-methylated via the N-methyltransferase gliN, before the gliotoxin oxidoreductase gliT-mediated disulfide bridge closure. GliN-mediated amide methylation confers stability to ETP, damping the spontaneous formation of tri- and tetrasulfides. Intracellular dithiol gliotoxin oxidized by gliT is subsequently effluxed by gliA. Gliotoxin contributes to pathogenesis during invasive aspergillosis. In macrophages and neutrophils, gliotoxin showed inhibition of various different cell functions including cytokine production, antigen presentation, phagocytosis, and production of reactive oxygen species. This Aspergillus fumigatus (strain ATCC MYA-4609 / CBS 101355 / FGSC A1100 / Af293) (Neosartorya fumigata) protein is O-methyltransferase gliM.